Reading from the N-terminus, the 122-residue chain is Fluoride-specific ion channel FluC (122 aa).

A run of 4 helical transmembrane segments spans residues 6–26, 33–53, 60–80, and 101–121; these read LVVG…INLV, SISF…GLLF, GLSP…FTTF, and LNII…FLIF. Residues G75 and T78 each coordinate Na(+).

It belongs to the fluoride channel Fluc/FEX (TC 1.A.43) family.

Its subcellular location is the cell inner membrane. The catalysed reaction is fluoride(in) = fluoride(out). Na(+) is not transported, but it plays an essential structural role and its presence is essential for fluoride channel function. Fluoride-specific ion channel. Important for reducing fluoride concentration in the cell, thus reducing its toxicity. The chain is Fluoride-specific ion channel FluC from Campylobacter jejuni subsp. jejuni serotype O:2 (strain ATCC 700819 / NCTC 11168).